We begin with the raw amino-acid sequence, 103 residues long: Large ribosomal subunit protein bL21 (103 aa).

Belongs to the bacterial ribosomal protein bL21 family. In terms of assembly, part of the 50S ribosomal subunit. Contacts protein L20.

In terms of biological role, this protein binds to 23S rRNA in the presence of protein L20. This chain is Large ribosomal subunit protein bL21, found in Treponema denticola (strain ATCC 35405 / DSM 14222 / CIP 103919 / JCM 8153 / KCTC 15104).